Consider the following 500-residue polypeptide: Glycogen synthase (500 aa).

K15 contacts ADP-alpha-D-glucose.

It belongs to the glycosyltransferase 1 family. Bacterial/plant glycogen synthase subfamily.

The enzyme catalyses [(1-&gt;4)-alpha-D-glucosyl](n) + ADP-alpha-D-glucose = [(1-&gt;4)-alpha-D-glucosyl](n+1) + ADP + H(+). The protein operates within glycan biosynthesis; glycogen biosynthesis. Its function is as follows. Synthesizes alpha-1,4-glucan chains using ADP-glucose. The polypeptide is Glycogen synthase (Protochlamydia amoebophila (strain UWE25)).